The sequence spans 400 residues: Deoxyguanosinetriphosphate triphosphohydrolase-like protein (400 aa).

The 143-residue stretch at 73–215 (RLTHSIEVSQ…AAIADDIAYN (143 aa)) folds into the HD domain.

This sequence belongs to the dGTPase family. Type 2 subfamily.

In Bartonella quintana (strain Toulouse) (Rochalimaea quintana), this protein is Deoxyguanosinetriphosphate triphosphohydrolase-like protein.